A 101-amino-acid chain; its full sequence is Large ribosomal subunit protein eL43 (101 aa).

Residues 40–62 (CPSCRSLVRLKRLAFGIWQCPKC) form a C4-type zinc finger.

It belongs to the eukaryotic ribosomal protein eL43 family. It depends on Zn(2+) as a cofactor.

The protein is Large ribosomal subunit protein eL43 of Pyrobaculum islandicum (strain DSM 4184 / JCM 9189 / GEO3).